A 255-amino-acid polypeptide reads, in one-letter code: Homeobox protein Hox-D4 (255 aa).

The tract at residues Glu-31–Leu-127 is disordered. Pro residues predominate over residues Glu-94 to Leu-107. An Antp-type hexapeptide motif is present at residues Val-133 to Lys-138. A DNA-binding region (homeobox) is located at residues Pro-154–His-213. The interval Asp-212–Leu-255 is disordered. A compositionally biased stretch (low complexity) spans Ser-222 to Ser-234. Residues Ala-245–Leu-255 show a composition bias toward basic and acidic residues.

Belongs to the Antp homeobox family. Deformed subfamily. Forms a DNA-binding heterodimer with transcription factor PBX1.

The protein resides in the nucleus. Its function is as follows. Sequence-specific transcription factor which is part of a developmental regulatory system that provides cells with specific positional identities on the anterior-posterior axis. This chain is Homeobox protein Hox-D4 (HOXD4), found in Homo sapiens (Human).